The following is a 465-amino-acid chain: Interferon-inducible GTPase 5 (465 aa).

In terms of domain architecture, IRG-type G spans 53-235 (TRLEVGVTGE…PLLMSTWERD (183 aa)). GTP-binding positions include 62 to 69 (ESGAGKSS), 87 to 91 (TGVVE), 169 to 171 (KVD), and 216 to 218 (SNL). 2 positions are modified to phosphoserine: serine 247 and serine 304. The segment at 405–438 (EEEEDTQPDVSLEAAGDNGVEKRGSGEGSMEEAP) is disordered.

This sequence belongs to the TRAFAC class dynamin-like GTPase superfamily. IRG family.

Its subcellular location is the cell projection. The protein resides in the cilium. It is found in the flagellum. The protein localises to the lipid droplet. The enzyme catalyses GTP + H2O = GDP + phosphate + H(+). Its function is as follows. Required for sperm motility and therefore male fertility, via positive regulation of spermatozoa fibrous sheath formation. The sequence is that of Interferon-inducible GTPase 5 (IRGC) from Bos taurus (Bovine).